The sequence spans 206 residues: Octanoyltransferase (206 aa).

The BPL/LPL catalytic domain occupies P30–I206. Residues R69–H76, S137–G139, and G150–A152 each bind substrate. The active-site Acyl-thioester intermediate is the C168.

It belongs to the LipB family.

Its subcellular location is the cytoplasm. It carries out the reaction octanoyl-[ACP] + L-lysyl-[protein] = N(6)-octanoyl-L-lysyl-[protein] + holo-[ACP] + H(+). It participates in protein modification; protein lipoylation via endogenous pathway; protein N(6)-(lipoyl)lysine from octanoyl-[acyl-carrier-protein]: step 1/2. Its function is as follows. Catalyzes the transfer of endogenously produced octanoic acid from octanoyl-acyl-carrier-protein onto the lipoyl domains of lipoate-dependent enzymes. Lipoyl-ACP can also act as a substrate although octanoyl-ACP is likely to be the physiological substrate. The protein is Octanoyltransferase of Francisella tularensis subsp. mediasiatica (strain FSC147).